A 448-amino-acid chain; its full sequence is uncharacterized protein (448 aa).

Residues Ser187–Gly198 show a composition bias toward basic and acidic residues. Disordered stretches follow at residues Ser187 to Arg221, Leu243 to Met270, and Leu291 to Gly361. Residues Leu243–Ser261 are compositionally biased toward low complexity. Positions Phe307 to Arg334 are enriched in basic and acidic residues.

The protein to M.tuberculosis Rv0025 and Rv0739.

This is an uncharacterized protein from Mycobacterium tuberculosis (strain CDC 1551 / Oshkosh).